Reading from the N-terminus, the 103-residue chain is Co-chaperonin GroES (103 aa).

Belongs to the GroES chaperonin family. As to quaternary structure, heptamer of 7 subunits arranged in a ring. Interacts with the chaperonin GroEL.

It localises to the cytoplasm. In terms of biological role, together with the chaperonin GroEL, plays an essential role in assisting protein folding. The GroEL-GroES system forms a nano-cage that allows encapsulation of the non-native substrate proteins and provides a physical environment optimized to promote and accelerate protein folding. GroES binds to the apical surface of the GroEL ring, thereby capping the opening of the GroEL channel. In Synechococcus sp. (strain CC9311), this protein is Co-chaperonin GroES.